Reading from the N-terminus, the 214-residue chain is tRNA (guanine-N(7)-)-methyltransferase (214 aa).

4 residues coordinate S-adenosyl-L-methionine: Glu43, Glu68, Asp95, and Asp117. The active site involves Asp117. Residues Lys121, Asp153, and 190–193 (TEYE) each bind substrate.

This sequence belongs to the class I-like SAM-binding methyltransferase superfamily. TrmB family.

It carries out the reaction guanosine(46) in tRNA + S-adenosyl-L-methionine = N(7)-methylguanosine(46) in tRNA + S-adenosyl-L-homocysteine. It participates in tRNA modification; N(7)-methylguanine-tRNA biosynthesis. Catalyzes the formation of N(7)-methylguanine at position 46 (m7G46) in tRNA. The sequence is that of tRNA (guanine-N(7)-)-methyltransferase from Staphylococcus haemolyticus (strain JCSC1435).